The chain runs to 220 residues: Splicing factor U2AF 26 kDa subunit (220 aa).

Ala2 carries the N-acetylalanine modification. The C3H1-type 1 zinc finger occupies 12–40; sequence EKDKVNCSFYFKIGACRHGDRCSRLHNKP. One can recognise an RRM domain in the interval 65-147; the sequence is SHCHVSDVEV…QAVHAELSPV (83 aa). Residues 149–176 form a C3H1-type 2 zinc finger; the sequence is DFRESCCRQYEMGECTRGGFCNFMHLRP. Residues 186–220 are disordered; sequence YGRGPRHRSPPRSHTGHRPRERNRRRSPDHRHGRF. Residues 189-220 show a composition bias toward basic residues; the sequence is GPRHRSPPRSHTGHRPRERNRRRSPDHRHGRF.

Belongs to the splicing factor SR family. Interacts with GFI1, U2AF2 and C1QBP. Isoform 3 interacts with PER1. Isoform 3 is rapidly degraded by a proteasome-mediated degradation pathway. As to expression, ubiquitous. Highly expressed in the brain.

Its subcellular location is the nucleus. It localises to the nucleus speckle. The protein resides in the cytoplasm. In terms of biological role, RNA-binding protein that function as a pre-mRNA splicing factor. Plays a critical role in both constitutive and enhancer-dependent splicing by mediating protein-protein interactions and protein-RNA interactions required for accurate 3'-splice site selection. It can functionally substitute for U2AF1 in constitutive splicing and enhancer-dependent splicing. Acts by enhancing the binding of U2AF2 to weak pyrimidine tracts. Also participates in the regulation of alternative pre-mRNA splicing. Activates exon 5 skipping of PTPRC during T-cell activation; an event reversed by GFI1. Binds to RNA at the AG dinucleotide at the 3'-splice site. Shows a preference for AGC or AGA. Alternative splicing of U2AF1L4 may play a role in connecting the circadian rhythm to changing external cues: may provide a circadian buffering system in central and periphery clocks that allows synchronized adaption to clock-resetting stimuli in order to prevent potentially pathogenic desynchronization. The protein is Splicing factor U2AF 26 kDa subunit (U2af1l4) of Mus musculus (Mouse).